Here is a 229-residue protein sequence, read N- to C-terminus: Ribulose-phosphate 3-epimerase (229 aa).

Position 13 (S13) interacts with substrate. 3 residues coordinate a divalent metal cation: H36, D38, and H69. Residue D38 is the Proton acceptor of the active site. Substrate-binding positions include H69, 145–148 (GFGG), 178–180 (DGG), and 200–201 (GS). D178 contributes to the a divalent metal cation binding site. Residue D178 is the Proton donor of the active site.

Belongs to the ribulose-phosphate 3-epimerase family. It depends on a divalent metal cation as a cofactor.

The catalysed reaction is D-ribulose 5-phosphate = D-xylulose 5-phosphate. Its pathway is carbohydrate degradation. Functionally, catalyzes the reversible epimerization of D-ribulose 5-phosphate to D-xylulose 5-phosphate. This is Ribulose-phosphate 3-epimerase from Mycobacterium bovis (strain ATCC BAA-935 / AF2122/97).